A 253-amino-acid chain; its full sequence is Ribonuclease HII (253 aa).

Residues 70–253 form the RNase H type-2 domain; it reads DLIAGVDEVG…KTFAPIKDIL (184 aa). Residues Asp-76, Glu-77, and Asp-168 each contribute to the a divalent metal cation site.

Belongs to the RNase HII family. Mn(2+) is required as a cofactor. It depends on Mg(2+) as a cofactor.

It is found in the cytoplasm. It carries out the reaction Endonucleolytic cleavage to 5'-phosphomonoester.. Functionally, endonuclease that specifically degrades the RNA of RNA-DNA hybrids. The protein is Ribonuclease HII of Leuconostoc mesenteroides subsp. mesenteroides (strain ATCC 8293 / DSM 20343 / BCRC 11652 / CCM 1803 / JCM 6124 / NCDO 523 / NBRC 100496 / NCIMB 8023 / NCTC 12954 / NRRL B-1118 / 37Y).